Consider the following 259-residue polypeptide: 3-deoxy-manno-octulosonate cytidylyltransferase (259 aa).

The protein belongs to the KdsB family.

The protein resides in the cytoplasm. It carries out the reaction 3-deoxy-alpha-D-manno-oct-2-ulosonate + CTP = CMP-3-deoxy-beta-D-manno-octulosonate + diphosphate. Its pathway is nucleotide-sugar biosynthesis; CMP-3-deoxy-D-manno-octulosonate biosynthesis; CMP-3-deoxy-D-manno-octulosonate from 3-deoxy-D-manno-octulosonate and CTP: step 1/1. It participates in bacterial outer membrane biogenesis; lipopolysaccharide biosynthesis. Its function is as follows. Activates KDO (a required 8-carbon sugar) for incorporation into bacterial lipopolysaccharide in Gram-negative bacteria. This is 3-deoxy-manno-octulosonate cytidylyltransferase from Nitrosococcus oceani (strain ATCC 19707 / BCRC 17464 / JCM 30415 / NCIMB 11848 / C-107).